Reading from the N-terminus, the 1470-residue chain is Transient receptor potential cation channel subfamily M member 2 (1470 aa).

The Cytoplasmic segment spans residues 1-725 (MDEAALEPTL…GELSVDNPHW (725 aa)). ADP-D-ribose contacts are provided by residues Y267, R274, 305–308 (GPGT), and R330. The stretch at 726–738 (KVLLCMIFFPLIY) is an intramembrane region. Residues 739-808 (TGFLTFRRDE…MSFLKSPQVK (70 aa)) are Cytoplasmic-facing. The chain crosses the membrane as a helical span at residues 809 to 829 (FYWNIASYFGFLWLFAVVLMI). Residues 830 to 836 (DFQTSPS) are Extracellular-facing. A helical membrane pass occupies residues 837-857 (WRELLLYVWLTSLVCEEIRQL). Ca(2+) contacts are provided by E853 and Q856. At 858 to 876 (YHDFDGSGFRRKAKMYIKD) the chain is on the cytoplasmic side. The chain crosses the membrane as a helical span at residues 877–897 (LWNILDVLSIVLFIAGLICRL). Ca(2+) is bound at residue N879. At 898–905 (QASDTVFY) the chain is on the extracellular side. A helical membrane pass occupies residues 906 to 926 (IGKVILCIDFIIFCLRLMAIF). Over 927 to 941 (SISRTLGPKIIIVRR) the chain is Cytoplasmic. A helical membrane pass occupies residues 942–968 (MMLDLFFFMFLLSIWVVAYGVAKQGIL). Residues 969 to 977 (IENEERLNW) lie on the Extracellular side of the membrane. An intramembrane region (pore-forming) is located at residues 978–1002 (IIRGAVYEPYITIFGNFPTNIDNTL). Positions 991–993 (FGN) match the Selectivity filter motif. At 1003–1034 (FDISSCSVNASDPLKPKCPMLNADNTPVFPEW) the chain is on the extracellular side. C1008 and C1020 are oxidised to a cystine. N-linked (GlcNAc...) asparagine glycosylation occurs at N1011. Residues 1035–1059 (LTIMMLCVYLLFANILLLNLLIAIF) form a helical membrane-spanning segment. Topologically, residues 1060–1087 (NYTFQEVQDNTDTIWKFQRYELIKEYHS) are cytoplasmic. E1084 provides a ligand contact to Ca(2+). The stretch at 1088 to 1105 (RPALPPPFILLSHLILFI) is an intramembrane region. At 1106–1470 (RGVFLRDLPQ…QIAHHHNTYF (365 aa)) the chain is on the cytoplasmic side. Residues 1157–1470 (HRIHDTAEKV…QIAHHHNTYF (314 aa)) are divergent Nudix hydrolase-like domain. Disordered stretches follow at residues 1215–1256 (KSKV…LQYP) and 1281–1314 (PPVY…GKGA). The span at 1231-1244 (DDGDSSGQETDDEE) shows a compositional bias: acidic residues. Residues 1283 to 1295 (VYNQQDSSESDTS) are compositionally biased toward polar residues. D1398 and R1400 together coordinate ADP-D-ribose.

It belongs to the transient receptor (TC 1.A.4) family. LTrpC subfamily. TRPM2 sub-subfamily. In terms of assembly, homotetramer.

Its subcellular location is the cell membrane. The catalysed reaction is Ca(2+)(in) = Ca(2+)(out). It carries out the reaction Na(+)(in) = Na(+)(out). With respect to regulation, activated by intracellular ADP-ribose. Ca(2+) and PI(4,5)P2 are required for channel opening by ADP-ribose. Nonselective, voltage-independent cation channel that mediates Ca(2+) influx, leading to increased cytoplasmic Ca(2+) levels. Functions as a ligand-gated ion channel, gated by intracellular adenosine diphosphate ribose (ADP-ribose), Ca(2+), warm temperature, and oxidative stress. Binding of ADP-ribose to the cytoplasmic N-terminal region causes a conformation change; the channel is primed but still requires Ca(2+) binding to trigger channel opening. The chain is Transient receptor potential cation channel subfamily M member 2 from Danio rerio (Zebrafish).